We begin with the raw amino-acid sequence, 453 residues long: UDP-glycosyltransferase 76E9 (453 aa).

UDP-alpha-D-glucose-binding positions include S279, 337–339 (APQ), 354–362 (HCGWNSTLE), and 376–379 (TTDQ).

The protein belongs to the UDP-glycosyltransferase family.

In Arabidopsis thaliana (Mouse-ear cress), this protein is UDP-glycosyltransferase 76E9 (UGT76E9).